Reading from the N-terminus, the 324-residue chain is MRSAVLFFFALPFSISLYSSSNKNFPYWILLEKGRQFLYSKSEFSKSNLTHAINYLQEALLRKGVYPEASYYLSVAYGMSGNAILEKLNLYKSFEDRYYLLDESFEKKILFSLAKMAELENNYVDTIDYLNDILNKFSTKKDYYSYHDYSQGENSMSNNELNASFYLTSYLKQVRGAFGIDFTFNLYRFKNYNVIDTHQLLSKVYLHLKAYELSITHGLIAAVGILTRMYDYVCYYEPVYQFKNLRSFVQKINKYKAIKNAFESTDFWEIVYNVAAATYAYSNGNYKFRAIDTWKLVVDLAPRFSPYIAKSRSQIKNSVYLKKN.

This is an uncharacterized protein from Borreliella burgdorferi (strain ATCC 35210 / DSM 4680 / CIP 102532 / B31) (Borrelia burgdorferi).